A 197-amino-acid chain; its full sequence is FMN-dependent NADH:quinone oxidoreductase (197 aa).

Residues serine 10, 16–18, 93–96, and 137–140 each bind FMN; these read SQS, MYNF, and TRGG.

This sequence belongs to the azoreductase type 1 family. In terms of assembly, homodimer. The cofactor is FMN.

The catalysed reaction is 2 a quinone + NADH + H(+) = 2 a 1,4-benzosemiquinone + NAD(+). It carries out the reaction N,N-dimethyl-1,4-phenylenediamine + anthranilate + 2 NAD(+) = 2-(4-dimethylaminophenyl)diazenylbenzoate + 2 NADH + 2 H(+). Its function is as follows. Quinone reductase that provides resistance to thiol-specific stress caused by electrophilic quinones. Also exhibits azoreductase activity. Catalyzes the reductive cleavage of the azo bond in aromatic azo compounds to the corresponding amines. The sequence is that of FMN-dependent NADH:quinone oxidoreductase from Shewanella frigidimarina (strain NCIMB 400).